The primary structure comprises 634 residues: CRISPR-associated protein MJ1674 (634 aa).

Functionally, CRISPR (clustered regularly interspaced short palindromic repeat) is an adaptive immune system that provides protection against mobile genetic elements (viruses, transposable elements and conjugative plasmids). CRISPR clusters contain spacers, sequences complementary to antecedent mobile elements, and target invading nucleic acids. CRISPR clusters are transcribed and processed into CRISPR RNA (crRNA). The type III Csm effector complex binds crRNA and acts as a crRNA-guided RNase, DNase and cyclic oligoadenylate synthase; binding of target RNA cognate to the crRNA is required for all activities. The chain is CRISPR-associated protein MJ1674 from Methanocaldococcus jannaschii (strain ATCC 43067 / DSM 2661 / JAL-1 / JCM 10045 / NBRC 100440) (Methanococcus jannaschii).